A 271-amino-acid chain; its full sequence is uncharacterized protein (271 aa).

Disordered stretches follow at residues Lys50–Leu93 and Lys128–Val233. 2 stretches are compositionally biased toward low complexity: residues Ser61–Leu93 and Asn129–Asn165. Residues Thr169–Asn179 show a composition bias toward basic and acidic residues. Acidic residues-rich tracts occupy residues Glu180–Glu199 and Met207–Glu217.

This is an uncharacterized protein from Dictyostelium discoideum (Social amoeba).